Consider the following 1399-residue polypeptide: Alpha-glucan water dikinase 1, chloroplastic (1399 aa).

A chloroplast-targeting transit peptide spans 1-75; it reads MSNSVVHNLL…GRPLSFVPRA (75 aa). An N-acetylvaline modification is found at V76. A disordered region spans residues 265 to 306; sequence LLKKDNSNESPKSNGTSSSGREEKKKVSKQPERKKNYNTDKI. Polar residues predominate over residues 272-283; the sequence is NESPKSNGTSSS. The segment covering 284 to 306 has biased composition (basic and acidic residues); sequence GREEKKKVSKQPERKKNYNTDKI. H1004 serves as the catalytic Tele-phosphohistidine intermediate.

It belongs to the PEP-utilizing enzyme family. Homodimer. Requires Mg(2+) as cofactor.

The protein localises to the plastid. The protein resides in the chloroplast. It catalyses the reaction [(1-&gt;4)-alpha-D-glucosyl](n) + n ATP + n H2O = [(1-&gt;4)-6-phospho-alpha-D-glucosyl](n) + n AMP + n phosphate + 2n H(+). Its function is as follows. Mediates the incorporation of phosphate into starch-like alpha-glucan, mostly at the C-6 position of glucose units. Acts as an overall regulator of starch mobilization. Required for starch degradation, suggesting that the phosphate content of starch regulates its degradability. This Arabidopsis thaliana (Mouse-ear cress) protein is Alpha-glucan water dikinase 1, chloroplastic.